Consider the following 508-residue polypeptide: Photosystem II CP47 reaction center protein (508 aa).

Helical transmembrane passes span 21-36 (AVHIMHTALVSGWAGS), 101-115 (IVFSGLCFLAAIWHW), 140-156 (GIHLFLAGVACFGFGAF), 203-218 (IAAGTLGILAGLFHLS), 237-252 (VLSSSIAAVFFAAFVV), and 457-472 (TFALLFFFGHIWHGAR).

This sequence belongs to the PsbB/PsbC family. PsbB subfamily. In terms of assembly, PSII is composed of 1 copy each of membrane proteins PsbA, PsbB, PsbC, PsbD, PsbE, PsbF, PsbH, PsbI, PsbJ, PsbK, PsbL, PsbM, PsbT, PsbX, PsbY, PsbZ, Psb30/Ycf12, at least 3 peripheral proteins of the oxygen-evolving complex and a large number of cofactors. It forms dimeric complexes. The cofactor is Binds multiple chlorophylls. PSII binds additional chlorophylls, carotenoids and specific lipids..

Its subcellular location is the plastid. It is found in the chloroplast thylakoid membrane. Its function is as follows. One of the components of the core complex of photosystem II (PSII). It binds chlorophyll and helps catalyze the primary light-induced photochemical processes of PSII. PSII is a light-driven water:plastoquinone oxidoreductase, using light energy to abstract electrons from H(2)O, generating O(2) and a proton gradient subsequently used for ATP formation. This chain is Photosystem II CP47 reaction center protein, found in Agrostis stolonifera (Creeping bentgrass).